A 253-amino-acid chain; its full sequence is MRKTFLAGNWKMHYTSAEASIVAKKIATEVKTLKDDVVIMITPPFTALSKVSECIKGSNILLGAQNMSYMESGARTSEISPSMLLEFGVEYVILGHSECRLYLAETDEIINKKILAGLKHPFKYLILCVGETLDERDSGKTLEVVLNQVKKGLNCVSESDIQRIILAYEPVWAIGTGKTATKEEAEEVHKAIRLEITKLYSKSASDNIIIQYGGSVNSNNVKELMNEPNIDGALIGGASLKAESFLSIINNVL.

Substrate is bound at residue Asn9–Lys11. His96 acts as the Electrophile in catalysis. Glu169 (proton acceptor) is an active-site residue. Substrate-binding positions include Gly175, Ser215, and Gly236–Gly237.

The protein belongs to the triosephosphate isomerase family. In terms of assembly, homodimer.

It localises to the cytoplasm. The catalysed reaction is D-glyceraldehyde 3-phosphate = dihydroxyacetone phosphate. It participates in carbohydrate biosynthesis; gluconeogenesis. Its pathway is carbohydrate degradation; glycolysis; D-glyceraldehyde 3-phosphate from glycerone phosphate: step 1/1. Functionally, involved in the gluconeogenesis. Catalyzes stereospecifically the conversion of dihydroxyacetone phosphate (DHAP) to D-glyceraldehyde-3-phosphate (G3P). The sequence is that of Triosephosphate isomerase from Borreliella burgdorferi (strain ZS7) (Borrelia burgdorferi).